The following is a 260-amino-acid chain: NAD-capped RNA hydrolase NudC (260 aa).

Substrate contacts are provided by Lys25 and Arg69. Zn(2+) is bound by residues Cys98 and Cys101. Glu111 contacts substrate. The Zn(2+) site is built by Cys116 and Cys119. Tyr124 provides a ligand contact to substrate. The Nudix hydrolase domain occupies 125-248 (PQIAPCVIVA…TVARRLIEDT (124 aa)). Residues Ala158, Glu174, and Glu178 each contribute to the a divalent metal cation site. A Nudix box motif is present at residues 159-180 (GFVEVGETLEQAVSREVLEESN). 192 to 199 (QPWPFPHS) contributes to the substrate binding site. An a divalent metal cation-binding site is contributed by Glu219. Residue Ala241 participates in substrate binding.

The protein belongs to the Nudix hydrolase family. NudC subfamily. As to quaternary structure, homodimer. Mg(2+) is required as a cofactor. It depends on Mn(2+) as a cofactor. The cofactor is Zn(2+).

The catalysed reaction is a 5'-end NAD(+)-phospho-ribonucleoside in mRNA + H2O = a 5'-end phospho-adenosine-phospho-ribonucleoside in mRNA + beta-nicotinamide D-ribonucleotide + 2 H(+). It carries out the reaction NAD(+) + H2O = beta-nicotinamide D-ribonucleotide + AMP + 2 H(+). The enzyme catalyses NADH + H2O = reduced beta-nicotinamide D-ribonucleotide + AMP + 2 H(+). In terms of biological role, mRNA decapping enzyme that specifically removes the nicotinamide adenine dinucleotide (NAD) cap from a subset of mRNAs by hydrolyzing the diphosphate linkage to produce nicotinamide mononucleotide (NMN) and 5' monophosphate mRNA. The NAD-cap is present at the 5'-end of some mRNAs and stabilizes RNA against 5'-processing. Has preference for mRNAs with a 5'-end purine. Catalyzes the hydrolysis of a broad range of dinucleotide pyrophosphates. This is NAD-capped RNA hydrolase NudC from Yersinia pseudotuberculosis serotype O:1b (strain IP 31758).